The chain runs to 492 residues: Proline--tRNA ligase (492 aa).

The protein belongs to the class-II aminoacyl-tRNA synthetase family. ProS type 3 subfamily. In terms of assembly, homodimer.

The protein localises to the cytoplasm. The enzyme catalyses tRNA(Pro) + L-proline + ATP = L-prolyl-tRNA(Pro) + AMP + diphosphate. In terms of biological role, catalyzes the attachment of proline to tRNA(Pro) in a two-step reaction: proline is first activated by ATP to form Pro-AMP and then transferred to the acceptor end of tRNA(Pro). In Flavobacterium psychrophilum (strain ATCC 49511 / DSM 21280 / CIP 103535 / JIP02/86), this protein is Proline--tRNA ligase.